A 224-amino-acid polypeptide reads, in one-letter code: ATP-dependent Clp protease proteolytic subunit 1 (224 aa).

Ser-120 serves as the catalytic Nucleophile. Residue His-145 is part of the active site.

This sequence belongs to the peptidase S14 family. As to quaternary structure, fourteen ClpP subunits assemble into 2 heptameric rings which stack back to back to give a disk-like structure with a central cavity, resembling the structure of eukaryotic proteasomes.

The protein localises to the cytoplasm. The enzyme catalyses Hydrolysis of proteins to small peptides in the presence of ATP and magnesium. alpha-casein is the usual test substrate. In the absence of ATP, only oligopeptides shorter than five residues are hydrolyzed (such as succinyl-Leu-Tyr-|-NHMec, and Leu-Tyr-Leu-|-Tyr-Trp, in which cleavage of the -Tyr-|-Leu- and -Tyr-|-Trp bonds also occurs).. Its function is as follows. Cleaves peptides in various proteins in a process that requires ATP hydrolysis. Has a chymotrypsin-like activity. Plays a major role in the degradation of misfolded proteins. This Prochlorococcus marinus (strain MIT 9313) protein is ATP-dependent Clp protease proteolytic subunit 1.